We begin with the raw amino-acid sequence, 62 residues long: Small ribosomal subunit protein eS17 (62 aa).

The protein belongs to the eukaryotic ribosomal protein eS17 family.

The chain is Small ribosomal subunit protein eS17 from Methanocaldococcus jannaschii (strain ATCC 43067 / DSM 2661 / JAL-1 / JCM 10045 / NBRC 100440) (Methanococcus jannaschii).